We begin with the raw amino-acid sequence, 165 residues long: 3-isopropylmalate dehydratase small subunit (165 aa).

Belongs to the LeuD family. LeuD type 2 subfamily. As to quaternary structure, heterodimer of LeuC and LeuD.

The catalysed reaction is (2R,3S)-3-isopropylmalate = (2S)-2-isopropylmalate. The protein operates within amino-acid biosynthesis; L-leucine biosynthesis; L-leucine from 3-methyl-2-oxobutanoate: step 2/4. In terms of biological role, catalyzes the isomerization between 2-isopropylmalate and 3-isopropylmalate, via the formation of 2-isopropylmaleate. The protein is 3-isopropylmalate dehydratase small subunit of Helicobacter hepaticus (strain ATCC 51449 / 3B1).